We begin with the raw amino-acid sequence, 130 residues long: Large ribosomal subunit protein uL22 (130 aa).

Belongs to the universal ribosomal protein uL22 family. As to quaternary structure, part of the 50S ribosomal subunit.

In terms of biological role, this protein binds specifically to 23S rRNA; its binding is stimulated by other ribosomal proteins, e.g. L4, L17, and L20. It is important during the early stages of 50S assembly. It makes multiple contacts with different domains of the 23S rRNA in the assembled 50S subunit and ribosome. Its function is as follows. The globular domain of the protein is located near the polypeptide exit tunnel on the outside of the subunit, while an extended beta-hairpin is found that lines the wall of the exit tunnel in the center of the 70S ribosome. In Clavibacter sepedonicus (Clavibacter michiganensis subsp. sepedonicus), this protein is Large ribosomal subunit protein uL22.